We begin with the raw amino-acid sequence, 269 residues long: DNA-binding protein RFXANK (269 aa).

The tract at residues 1–36 (MEPTQVAENLVPNQQPPVPDLEDPEDTRDESPENSD) is disordered. ANK repeat units lie at residues 88-127 (LDSLSIHQLAAQGELSQLKDHLRKGACPACTCLSGNNLIN), 132-161 (RGFTPLIWASAFGEIETVRFLLDWGADPHI), 165-194 (ERESALSLASMGGYTDIVRLLLDRDVDINI), 198-227 (NGGTPLLYAVRGNHVKCVEALLARGADLTT), and 231-260 (SGYTPMDLAVALGYRKVQQVMESHILRLFQ).

Forms homodimers. The RFX heterotetrameric complex consists of 2 molecules of RFX5 and one each of RFXAP and RFX-B/RFXANK; with each subunit representing a separate complementation group. Interacts (via ankyrin repeats) with RFX5 (via PxLPxI/L motif); the interaction is direct. RFX forms cooperative DNA binding complexes with X2BP and CBF/NF-Y. RFX associates with CIITA to form an active transcriptional complex. Interacts with RAF1. Interacts with RFX7. In terms of processing, phosphorylated by RAF1. In terms of tissue distribution, expressed primarily in thymus, lung and testis.

It localises to the cytoplasm. The protein resides in the nucleus. In terms of biological role, activates transcription from class II MHC promoters. Activation requires the activity of the MHC class II transactivator/CIITA. May regulate other genes in the cell. RFX binds the X1 box of MHC-II promoters. May also potentiate the activation of RAF1. The polypeptide is DNA-binding protein RFXANK (Rfxank) (Mus musculus (Mouse)).